The following is a 308-amino-acid chain: Tyrosine recombinase XerC (308 aa).

Residues 20 to 101 (SKLHTLIDDF…SVKAFSSWAQ (82 aa)) form the Core-binding (CB) domain. Residues 122–302 (DLPKILGEQQ…SNKRLLEAFN (181 aa)) form the Tyr recombinase domain. Residues Arg-163, Lys-187, His-254, Arg-257, and His-280 contribute to the active site. Tyr-289 functions as the O-(3'-phospho-DNA)-tyrosine intermediate in the catalytic mechanism.

The protein belongs to the 'phage' integrase family. XerC subfamily. In terms of assembly, forms a cyclic heterotetrameric complex composed of two molecules of XerC and two molecules of XerD.

The protein localises to the cytoplasm. Its function is as follows. Site-specific tyrosine recombinase, which acts by catalyzing the cutting and rejoining of the recombining DNA molecules. The XerC-XerD complex is essential to convert dimers of the bacterial chromosome into monomers to permit their segregation at cell division. It also contributes to the segregational stability of plasmids. The protein is Tyrosine recombinase XerC of Corynebacterium glutamicum (strain ATCC 13032 / DSM 20300 / JCM 1318 / BCRC 11384 / CCUG 27702 / LMG 3730 / NBRC 12168 / NCIMB 10025 / NRRL B-2784 / 534).